Consider the following 223-residue polypeptide: Coiled-coil domain-containing protein 124 (223 aa).

The segment at 1 to 126 (MPKKFQGENT…AEKAKSHLEV (126 aa)) is disordered. The stretch at 15–82 (ARARRAEAKA…LLEEEDSKLK (68 aa)) forms a coiled coil. Composition is skewed to basic and acidic residues over residues 18–74 (RRAE…QRLL) and 99–126 (QIED…HLEV). Residues serine 141 and serine 194 each carry the phosphoserine modification. A disordered region spans residues 204–223 (WLRSPDNPMNQRAVPFNAPK).

Belongs to the CCDC124 family. As to quaternary structure, associates with translationally inactive ribosomes in the nonrotated state. Interacts with RASGEF1B. Ubiquitously expressed.

It is found in the cytoplasm. It localises to the cytoskeleton. Its subcellular location is the microtubule organizing center. The protein resides in the centrosome. The protein localises to the midbody. Ribosome-binding protein involved in ribosome hibernation: associates with translationally inactive ribosomes and stabilizes the nonrotated conformation of the 80S ribosome, thereby promoting ribosome preservation and storage. Also required for proper progression of late cytokinetic stages. The sequence is that of Coiled-coil domain-containing protein 124 from Homo sapiens (Human).